The following is a 222-amino-acid chain: Deoxyribose-phosphate aldolase (222 aa).

The active-site Proton donor/acceptor is the aspartate 89. The Schiff-base intermediate with acetaldehyde role is filled by lysine 151. Lysine 180 acts as the Proton donor/acceptor in catalysis.

Belongs to the DeoC/FbaB aldolase family. DeoC type 1 subfamily.

The protein localises to the cytoplasm. It carries out the reaction 2-deoxy-D-ribose 5-phosphate = D-glyceraldehyde 3-phosphate + acetaldehyde. It functions in the pathway carbohydrate degradation; 2-deoxy-D-ribose 1-phosphate degradation; D-glyceraldehyde 3-phosphate and acetaldehyde from 2-deoxy-alpha-D-ribose 1-phosphate: step 2/2. Its function is as follows. Catalyzes a reversible aldol reaction between acetaldehyde and D-glyceraldehyde 3-phosphate to generate 2-deoxy-D-ribose 5-phosphate. The sequence is that of Deoxyribose-phosphate aldolase from Acholeplasma laidlawii (strain PG-8A).